A 263-amino-acid polypeptide reads, in one-letter code: uncharacterized protein (263 aa).

An N-terminal signal peptide occupies residues 1–22 (MEYLKRLALLISVIILTIFIMG). C23 carries N-palmitoyl cysteine lipidation. A lipid anchor (S-diacylglycerol cysteine) is attached at C23.

The protein belongs to the staphylococcal tandem lipoprotein family.

The protein resides in the cell membrane. This is an uncharacterized protein from Staphylococcus aureus (strain USA300).